A 286-amino-acid polypeptide reads, in one-letter code: L-cysteine S-thiosulfotransferase subunit SoxA (286 aa).

The N-terminal stretch at 1-28 is a signal peptide; that stretch reads MKKTIQRGLFTGALVLLTAMTSKPAHAA. Cysteine 106 and cysteine 137 are oxidised to a cystine. The 107-residue stretch at 180-286 folds into the Cytochrome c domain; that stretch reads DAYMKGKEMF…LKFNGPASRK (107 aa). Heme is bound by residues cysteine 200 and histidine 204. Arginine 243 serves as a coordination point for substrate. Cysteine 247 is a binding site for heme. The active-site Cysteine persulfide intermediate is cysteine 247.

The protein belongs to the SoxA family. In terms of assembly, heterodimer of SoxA and SoxX. The SoxAX complex interacts with CT1020, SoxAX-binding protein SaxB (SoxK); this interaction stimulates catalytic activity of the complex. Heme is required as a cofactor. Post-translationally, cysteine persulfide at Cys-247.

It is found in the periplasm. The catalysed reaction is L-cysteinyl-[SoxY protein] + thiosulfate + 2 Fe(III)-[cytochrome c] = S-sulfosulfanyl-L-cysteinyl-[SoxY protein] + 2 Fe(II)-[cytochrome c] + 2 H(+). It carries out the reaction S-sulfanyl-L-cysteinyl-[SoxY protein] + thiosulfate + 2 Fe(III)-[cytochrome c] = S-(2-sulfodisulfanyl)-L-cysteinyl-[SoxY protein] + 2 Fe(II)-[cytochrome c] + 2 H(+). C-type monoheme cytochrome, which is part of the SoxAX cytochrome complex involved in sulfur oxidation. The SoxAX complex catalyzes the formation of a heterodisulfide bond between the conserved cysteine residue on a sulfur carrier SoxYZ complex subunit SoxY and thiosulfate or other inorganic sulfur substrates. This leads to the liberation of two electrons, which may be transferred from the SoxAX complex to another cytochrome c and which then may be used for reductive CO(2) fixation. In Chlorobaculum thiosulfatiphilum (Chlorobium limicola f.sp. thiosulfatophilum), this protein is L-cysteine S-thiosulfotransferase subunit SoxA.